Reading from the N-terminus, the 422-residue chain is Interleukin-11 receptor subunit alpha (422 aa).

A signal peptide spans 1-22 (MSSSCSGLSRVLVAVATALVSA). At 24-370 (SPCPQAWGPP…DSVEQVAVLV (347 aa)) the chain is on the extracellular side. The region spanning 27-110 (PQAWGPPGVQ…LGGTVTLQLG (84 aa)) is the Ig-like C2-type domain. 3 cysteine pairs are disulfide-bonded: Cys48–Cys94, Cys120–Cys130, and Cys170–Cys180. Fibronectin type-III domains follow at residues 112–219 (PPAR…LRPD) and 220–317 (PPQG…TPST). Residue Asn127 is glycosylated (N-linked (GlcNAc...) asparagine). Asn194 carries N-linked (GlcNAc...) asparagine glycosylation. The WSXWS motif motif lies at 304-308 (WSTWS). A disordered region spans residues 335-355 (EVEPQVDSPAPPRPSLQPHPR). Residues 371–391 (SLGILSFLGLVAGALALGLWL) form a helical membrane-spanning segment. Over 392–422 (RLRRGGKDGSPKPGFLASVIPVDRHPGAPNL) the chain is Cytoplasmic.

It belongs to the type I cytokine receptor family. Type 3 subfamily. In terms of assembly, on IL11 binding, forms a multimer complex with IL6ST/gp130. Post-translationally, a short soluble form is also released from the membrane by proteolysis. The sIL11RA is formed either by limited proteolysis of membrane-bound receptors, a process referred to as ectodomain shedding, or directly secreted from the cells after alternative mRNA splicing. mIL11RA is cleaved by the proteases ADAM10, ELANE and PRTN3.

It is found in the membrane. The protein resides in the secreted. Functionally, receptor for interleukin-11 (IL11). The receptor systems for IL6, LIF, OSM, CNTF, IL11 and CT1 can utilize IL6ST for initiating signal transmission. The IL11/IL11RA/IL6ST complex may be involved in the control of proliferation and/or differentiation of skeletogenic progenitor or other mesenchymal cells. Essential for the normal development of craniofacial bones and teeth. Restricts suture fusion and tooth number. Its function is as follows. Soluble form of IL11 receptor (sIL11RA) that acts as an agonist of IL11 activity. The IL11:sIL11RA complex binds to IL6ST/gp130 on cell surfaces and induces signaling also on cells that do not express membrane-bound IL11RA in a process called IL11 trans-signaling. This is Interleukin-11 receptor subunit alpha (IL11RA) from Pongo abelii (Sumatran orangutan).